The following is a 689-amino-acid chain: DNA ligase (689 aa).

NAD(+)-binding positions include 51–55 (DSEYD), 100–101 (SL), and E129. Catalysis depends on K131, which acts as the N6-AMP-lysine intermediate. Positions 152, 189, 308, and 332 each coordinate NAD(+). Zn(2+) contacts are provided by C426, C429, C444, and C450. The BRCT domain occupies 609-689 (ADEQPLKGQT…ELLALLAANS (81 aa)).

The protein belongs to the NAD-dependent DNA ligase family. LigA subfamily. Requires Mg(2+) as cofactor. The cofactor is Mn(2+).

It catalyses the reaction NAD(+) + (deoxyribonucleotide)n-3'-hydroxyl + 5'-phospho-(deoxyribonucleotide)m = (deoxyribonucleotide)n+m + AMP + beta-nicotinamide D-nucleotide.. DNA ligase that catalyzes the formation of phosphodiester linkages between 5'-phosphoryl and 3'-hydroxyl groups in double-stranded DNA using NAD as a coenzyme and as the energy source for the reaction. It is essential for DNA replication and repair of damaged DNA. This is DNA ligase from Shewanella sp. (strain ANA-3).